A 152-amino-acid chain; its full sequence is MFRGATLVNLDSKGRLTVPTRYREQLIESATGQMVCTIDIHRPCLLLYPLPEWEIIEQKLSRLSSMNPVERRVQRLLLGHASECQMDGAGRLLIAPVLRQHAGLTKEVMLVGQFNKFELWDETTWYQQVKEDIDAEQSATETLSERLQDLSL.

SpoVT-AbrB domains follow at residues 5 to 52 (ATLV…PLPE) and 81 to 124 (ASEC…DETT).

Belongs to the MraZ family. In terms of assembly, forms oligomers.

The protein localises to the cytoplasm. Its subcellular location is the nucleoid. Negatively regulates its own expression and that of the subsequent genes in the proximal part of the division and cell wall (dcw) gene cluster. Acts by binding directly to DNA. May also regulate the expression of genes outside the dcw cluster. The sequence is that of Transcriptional regulator MraZ from Salmonella paratyphi A (strain ATCC 9150 / SARB42).